The primary structure comprises 1235 residues: Major DNA-binding protein (1235 aa).

The disordered stretch occupies residues 536 to 584; sequence GGLDGKGDDGVPGGGAGGGGGRDVSGGPSDGLGGGRGGGGGGDSGGMMG. Positions 545 to 584 are enriched in gly residues; that stretch reads GVPGGGAGGGGGRDVSGGPSDGLGGGRGGGGGGDSGGMMG. The short motif at 846-847 is the Required for filament formation element; the sequence is FW. The segment covering 1214–1226 has biased composition (gly residues); sequence GVGGSSGGGGGSG. The disordered stretch occupies residues 1214 to 1235; the sequence is GVGGSSGGGGGSGLLPAKRSRL. Residues 1232–1235 are required for nuclear localization; the sequence is RSRL.

It belongs to the herpesviridae major DNA-binding protein family. In terms of assembly, homooligomers. Forms double-helical filaments necessary for the formation of replication compartments within the host nucleus. Interacts with the origin-binding protein. Interacts with the helicase primase complex; this interaction stimulates primer synthesis activity of the helicase-primase complex. Interacts with the DNA polymerase. Interacts with the alkaline exonuclease; this interaction increases its nuclease processivity.

The protein localises to the host nucleus. In terms of biological role, plays several crucial roles in viral infection. Participates in the opening of the viral DNA origin to initiate replication by interacting with the origin-binding protein. May disrupt loops, hairpins and other secondary structures present on ssDNA to reduce and eliminate pausing of viral DNA polymerase at specific sites during elongation. Promotes viral DNA recombination by performing strand-transfer, characterized by the ability to transfer a DNA strand from a linear duplex to a complementary single-stranded DNA circle. Can also catalyze the renaturation of complementary single strands. Additionally, reorganizes the host cell nucleus, leading to the formation of prereplicative sites and replication compartments. This process is driven by the protein which can form double-helical filaments in the absence of DNA. The polypeptide is Major DNA-binding protein (Homo sapiens (Human)).